The sequence spans 484 residues: Chromosomal replication initiator protein DnaA (484 aa).

The interval 1–74 (MEKSKNIWSL…ILTKNGYNNV (74 aa)) is domain I, interacts with DnaA modulators. Residues 74–139 (VTIVFTNQPP…EEEPTNFKNP (66 aa)) are domain II. The domain III, AAA+ region stretch occupies residues 140–356 (FLKKRYTFEN…AAVTKLKAYI (217 aa)). Gly-184, Gly-186, Lys-187, and Thr-188 together coordinate ATP. The interval 357–484 (DLDNIEIDID…TELMNKIKKN (128 aa)) is domain IV, binds dsDNA.

Belongs to the DnaA family. As to quaternary structure, oligomerizes as a right-handed, spiral filament on DNA at oriC.

The protein resides in the cytoplasm. Plays an essential role in the initiation and regulation of chromosomal replication. ATP-DnaA binds to the origin of replication (oriC) to initiate formation of the DNA replication initiation complex once per cell cycle. Binds the DnaA box (a 9 base pair repeat at the origin) and separates the double-stranded (ds)DNA. Forms a right-handed helical filament on oriC DNA; dsDNA binds to the exterior of the filament while single-stranded (ss)DNA is stabiized in the filament's interior. The ATP-DnaA-oriC complex binds and stabilizes one strand of the AT-rich DNA unwinding element (DUE), permitting loading of DNA polymerase. After initiation quickly degrades to an ADP-DnaA complex that is not apt for DNA replication. Binds acidic phospholipids. This is Chromosomal replication initiator protein DnaA from Borrelia garinii subsp. bavariensis (strain ATCC BAA-2496 / DSM 23469 / PBi) (Borreliella bavariensis).